The primary structure comprises 71 residues: Omega-conotoxin SO-3 (71 aa).

The N-terminal stretch at 1 to 22 (MKLTCMVIVAVLLLTACQLITA) is a signal peptide. Positions 23-45 (DDSRGTQKHRTLRSKTKLSMSTR) are excised as a propeptide. 3 disulfide bridges follow: Cys46/Cys61, Cys53/Cys65, and Cys60/Cys70. At Cys70 the chain carries Cysteine amide.

This sequence belongs to the conotoxin O1 superfamily. As to expression, expressed by the venom duct.

Its subcellular location is the secreted. In terms of biological role, omega-conotoxins act at presynaptic membranes, they bind and block voltage-gated calcium channels (Cav). This peptide selectively targets Cav2.2/CACNA1B (IC(50)=160 nM) voltage-gated calcium channels. When tested in mammals, this toxin displays an analgesic potency similar to MVIIA in a range of acute and chronic pain models in rodents, but has less adverse effects (tremor, diminution of spontaneous locomotor activity and bad coordinated locomotion) compared with identical dosages of MVIIA injected intrathecally. In Conus striatus (Striated cone), this protein is Omega-conotoxin SO-3.